Consider the following 362-residue polypeptide: Ferredoxin--NADP reductase, leaf isozyme 1, chloroplastic (362 aa).

A chloroplast-targeting transit peptide spans 1-36; it reads MAAVTAAAVSTSAAAAVTKASPSPAHCFLPCPPRTR. Positions 83–205 constitute an FAD-binding FR-type domain; that stretch reads KEPYVGKCLL…TGPVGKEMLM (123 aa). FAD contacts are provided by residues 141–144, 162–164, tyrosine 168, 179–181, and threonine 220; these read RLYS, CVK, and VCS. NADP(+) is bound by residues serine 144 and lysine 164. An intrachain disulfide couples cysteine 180 to cysteine 185. Position 181 is a phosphoserine (serine 181). NADP(+) contacts are provided by residues threonine 220, 252–253, 282–283, lysine 292, 321–322, and glutamate 360; these read VP, SR, and GL.

The protein belongs to the ferredoxin--NADP reductase type 1 family. Heterodimer with LFNR2. Component of high molecular weight thylakoid LFNRs-containing protein complexes containing LIR1, LFNR1, LFNR2, TIC62 and TROL proteins. Interacts directly with LFNR1 and LFNR2; LIR1 increases the affinity of LFNR1 and LFNR2 for TIC62 and subsequent thylakoid relocalization. Requires FAD as cofactor. Post-translationally, may form interchain disulfide bonds with LIR1.

It is found in the plastid. The protein resides in the chloroplast stroma. It localises to the chloroplast thylakoid membrane. The catalysed reaction is 2 reduced [2Fe-2S]-[ferredoxin] + NADP(+) + H(+) = 2 oxidized [2Fe-2S]-[ferredoxin] + NADPH. Its pathway is energy metabolism; photosynthesis. Functionally, plays a key role in regulating the relative amounts of cyclic and non-cyclic electron flow to meet the demands of the plant for ATP and reducing power. This Oryza sativa subsp. indica (Rice) protein is Ferredoxin--NADP reductase, leaf isozyme 1, chloroplastic.